A 385-amino-acid polypeptide reads, in one-letter code: MALEAGDMEEGQLSDSDSDMTVVPSDRPLQMAKVLGGGGAACAPVSNYRTVKHVDSSEESLDSDDDCSLWKRKRQKCHSPPPKPEPFPFGQSGQKPALNGGKKVNNIWGAVLQEQNQDAVATELGILGMEGTIDRSRQSETYNYLLAKKLAKKESQEYTKELDKDLDEYMHGDKKPGSKEEENGQGHLKRKRPVRDRLGNRVEMNYKGRYDITEEDSPEKVADEIAFRLQEPKKDLIARVVTILGNKKAIELLMETAEVEQNGGLFIMNGSRRRTPGGVFLNLLKNTPSISEEQIKDIFYIENQKEYENKKAARKRRTQLLGKKMKEAIKSLNFQEDDDTSRETFASDTNEALASLDEAQEGPGETKLDAEDAIEVDHPQDLDIF.

A compositionally biased stretch (acidic residues) spans M1 to S18. Residues M1 to D26 are disordered. Residue A2 is modified to N-acetylalanine. A necessary for interaction with CBP80 region spans residues A2 to L320. S14, S16, S56, S57, S60, and S63 each carry phosphoserine. The Nuclear localization signal signature appears at K71–R74. A disordered region spans residues R72–G101. The Nuclear export signal motif lies at V120–M129. The span at K164–G184 shows a compositional bias: basic and acidic residues. The disordered stretch occupies residues K164 to R192. The Nuclear localization signal motif lies at K189 to R192. The residue at position 217 (S217) is a Phosphoserine. Residues E219–Q319 are sufficient for poly U RNA-binding. A necessary for poly U RNA-binding and snRNA export region spans residues G270–G278. Residue T287 is modified to Phosphothreonine. Residues F334–F385 are disordered. Residues E343 to A352 show a composition bias toward polar residues. S347 is modified (phosphoserine). Positions G364–F385 are enriched in basic and acidic residues.

This sequence belongs to the PHAX family. Found in a U snRNA export complex with PHAX/RNUXA, NCBP1/CBP80, NCBP2/CBP20, RAN, XPO1 and m7G-capped RNA. Part of a precomplex with PHAX/RNUXA, NCBP1/CBP80, NCBP2/CBP20 and m7G-capped RNA. Interacts with NCBP1/CBP80. Found in a complex with snoRNA. Interacts with NCBP2/CBP20. Interacts with DDX39A; this interaction stimulates PHAX RNA binding activity. Post-translationally, phosphorylated in the nucleus. Dephosphorylated in the cytoplasm. In terms of tissue distribution, expressed in dorsal root ganglia and sensory neuron cell bodies.

It localises to the nucleus. It is found in the nucleoplasm. The protein localises to the cajal body. The protein resides in the cytoplasm. In terms of biological role, a phosphoprotein adapter involved in the XPO1-mediated U snRNA export from the nucleus. Bridge components required for U snRNA export, the cap binding complex (CBC)-bound snRNA on the one hand and the GTPase Ran in its active GTP-bound form together with the export receptor XPO1 on the other. Its phosphorylation in the nucleus is required for U snRNA export complex assembly and export, while its dephosphorylation in the cytoplasm causes export complex disassembly. It is recycled back to the nucleus via the importin alpha/beta heterodimeric import receptor. The directionality of nuclear export is thought to be conferred by an asymmetric distribution of the GTP- and GDP-bound forms of Ran between the cytoplasm and nucleus. Its compartmentalized phosphorylation cycle may also contribute to the directionality of export. Binds strongly to m7G-capped U1 and U5 small nuclear RNAs (snRNAs) in a sequence-unspecific manner and phosphorylation-independent manner. Also plays a role in the biogenesis of U3 small nucleolar RNA (snoRNA). Involved in the U3 snoRNA transport from nucleoplasm to Cajal bodies. Binds strongly to m7G-capped U3, U8 and U13 precursor snoRNAs and weakly to trimethylated (TMG)-capped U3, U8 and U13 snoRNAs. Also binds to telomerase RNA. This chain is Phosphorylated adapter RNA export protein (Phax), found in Rattus norvegicus (Rat).